The chain runs to 60 residues: Prokaryotic ubiquitin-like protein UBact (60 aa).

The segment at 1–60 (MPERKTQPTTDQPWTKPNDGGDESGPRSPEVERPNTRDLLERMKRVDPRQARRYRQRSGE) is disordered. Positions 29 to 50 (PEVERPNTRDLLERMKRVDPRQ) are enriched in basic and acidic residues. A compositionally biased stretch (basic residues) spans 51-60 (ARRYRQRSGE). Glu-60 is covalently cross-linked (Isoglutamyl lysine isopeptide (Glu-Lys) (interchain with K-? in acceptor proteins)).

Belongs to the ubiquitin-like protein UBact family.

In terms of biological role, may function as a protein modifier covalently attached to lysine residues of substrate proteins. This may serve to target the modified proteins for degradation by proteasomes. This is Prokaryotic ubiquitin-like protein UBact from Fraserbacteria sp. (strain RBG_16_55_9).